The following is a 256-amino-acid chain: POU domain class 2-associating factor 1 (256 aa).

Positions 1–23 (MLWQKPTAPEQAPAPARPYQGVR) are disordered. The region spanning 16-38 (ARPYQGVRVKEPVKELLRRKRGH) is the OCA domain.

This sequence belongs to the POU2AF family. As to quaternary structure, interacts with POU2F1/OCT1 and POU2F2/OCT2; the interaction increases POU2F1 and POU2F2 transactivation activity. In terms of processing, ubiquitinated; mediated by SIAH1 or SIAH2 and leading to its subsequent proteasomal degradation. As to expression, B-cell specific. Detected in mainly in spleen, but also in thymus, periphral blood leukocyte and small intestine.

The protein resides in the nucleus. Functionally, transcriptional coactivator that specifically associates with either POU2F1/OCT1 or POU2F2/OCT2. It boosts the POU2F1/OCT1 mediated promoter activity and to a lesser extent, that of POU2F2/OCT2. It recognizes the POU domains of POU2F1/OCT1 and POU2F2/OCT2. It is essential for the response of B-cells to antigens and required for the formation of germinal centers. Regulates IL6 expression in B cells as POU2F2/OCT2 coactivator. This Homo sapiens (Human) protein is POU domain class 2-associating factor 1.